We begin with the raw amino-acid sequence, 452 residues long: MTGVTGTEDTKVIESKINELNIDKSKPEKTNKVNKSDDVDNDDVDNDDNDDEDNDDDDDEITESGNSASSSGDKKKKKNKNKNKKKKKKKIISIDSSYPEGIFPEGQWMEYPLEDINSYRITSEEKRYLDRQQNNKWQDFRKGAEIHRRVRHKAQSSIKPGMTMIEIANLIEDSIRNYSNNDHTLKSGIGFPTGLSLNHVAAHYTPNTGDKLILKKDDIMKVDIGIHVNGRICDSAFTMTFNDEGKYDNIMKAVKEATYTGIKESGIDVRLNDIGAAIQEVMESYEMEENGKIYPIKCIKNLNGHNIDDFIIHSGKSVPIIANGDMTKMEEGEIFAIETFGSTGNGYVLPEGECSHYAMNKNIQHLKPPSERSKQLLESIKQNFGTLPWCRRYLERTGEEKYLFALNQLVRHGIIEEYPPIVDKRGSYTAQYEHTILLHPHKKEVVTKGDDY.

The segment at 1–91 (MTGVTGTEDT…KNKKKKKKKI (91 aa)) is disordered. Basic and acidic residues predominate over residues 8–38 (EDTKVIESKINELNIDKSKPEKTNKVNKSDD). A compositionally biased stretch (acidic residues) spans 39–62 (VDNDDVDNDDNDDEDNDDDDDEIT). Basic residues predominate over residues 74–91 (KKKKKNKNKNKKKKKKKI). His-203 is a binding site for substrate. Residues Asp-223, Asp-234, and His-305 each coordinate a divalent metal cation. His-313 provides a ligand contact to substrate. 2 residues coordinate a divalent metal cation: Glu-338 and Glu-433.

Belongs to the peptidase M24A family. Methionine aminopeptidase eukaryotic type 2 subfamily. Co(2+) is required as a cofactor. Zn(2+) serves as cofactor. Requires Mn(2+) as cofactor. It depends on Fe(2+) as a cofactor.

The protein localises to the cytoplasm. It carries out the reaction Release of N-terminal amino acids, preferentially methionine, from peptides and arylamides.. Functionally, cotranslationally removes the N-terminal methionine from nascent proteins. The N-terminal methionine is often cleaved when the second residue in the primary sequence is small and uncharged (Met-Ala-, Cys, Gly, Pro, Ser, Thr, or Val). The polypeptide is Methionine aminopeptidase 2 (Candida dubliniensis (strain CD36 / ATCC MYA-646 / CBS 7987 / NCPF 3949 / NRRL Y-17841) (Yeast)).